A 139-amino-acid chain; its full sequence is Maximins 4/H3 type 4 (139 aa).

A signal peptide spans 1–18; the sequence is MNFKYIIAVSFLIASAYA. Residues 19–43 constitute a propeptide that is removed on maturation; it reads RSVQNDEQSLSQRDVLEEESLREIR. Asn-70 is subject to Asparagine amide. Positions 74 to 118 are excised as a propeptide; sequence TAEEHEVMKRLEAVMRDLDSLDHPEEASERETRGFNQDEIAKEKR. Position 138 is an isoleucine amide (Ile-138).

It belongs to the bombinin family. In terms of tissue distribution, expressed by the skin glands.

It localises to the secreted. In terms of biological role, maximin-4 shows antibacterial activity against both Gram-positive and Gram-negative bacteria. It also shows antimicrobial activity against the fungus C.albicans, but not against A.flavus nor P.uticale. It has little hemolytic activity. It does not possess a significant cytotoxicity against tumor cell lines. It does not possess a significant anti-HIV activity. Its function is as follows. Maximin-H3 shows antibacterial activity against both Gram-positive and Gram-negative bacteria. It also shows antimicrobial activity against the fungus C.albicans. Shows strong hemolytic activity. This is Maximins 4/H3 type 4 from Bombina maxima (Giant fire-bellied toad).